Consider the following 135-residue polypeptide: Large ribosomal subunit protein uL16c (135 aa).

The protein belongs to the universal ribosomal protein uL16 family. As to quaternary structure, part of the 50S ribosomal subunit.

The protein localises to the plastid. Its subcellular location is the chloroplast. This chain is Large ribosomal subunit protein uL16c, found in Phaseolus vulgaris (Kidney bean).